The sequence spans 497 residues: Carboxylesterase (497 aa).

The active-site Acyl-ester intermediate is Ser-185. Catalysis depends on charge relay system residues Glu-319 and His-415.

This sequence belongs to the type-B carboxylesterase/lipase family.

The protein resides in the secreted. The catalysed reaction is a carboxylic ester + H2O = an alcohol + a carboxylate + H(+). The protein is Carboxylesterase of Thermobifida fusca (Thermomonospora fusca).